We begin with the raw amino-acid sequence, 192 residues long: Orotate phosphoribosyltransferase (192 aa).

116–124 contacts 5-phospho-alpha-D-ribose 1-diphosphate; it reads EDIVTTGLS. Positions 120 and 148 each coordinate orotate.

The protein belongs to the purine/pyrimidine phosphoribosyltransferase family. PyrE subfamily. As to quaternary structure, homodimer. Mg(2+) is required as a cofactor.

It catalyses the reaction orotidine 5'-phosphate + diphosphate = orotate + 5-phospho-alpha-D-ribose 1-diphosphate. It participates in pyrimidine metabolism; UMP biosynthesis via de novo pathway; UMP from orotate: step 1/2. Catalyzes the transfer of a ribosyl phosphate group from 5-phosphoribose 1-diphosphate to orotate, leading to the formation of orotidine monophosphate (OMP). In Bartonella henselae (strain ATCC 49882 / DSM 28221 / CCUG 30454 / Houston 1) (Rochalimaea henselae), this protein is Orotate phosphoribosyltransferase.